Reading from the N-terminus, the 53-residue chain is Large ribosomal subunit protein bL33A (53 aa).

It belongs to the bacterial ribosomal protein bL33 family.

In Mycoplasma genitalium (strain ATCC 33530 / DSM 19775 / NCTC 10195 / G37) (Mycoplasmoides genitalium), this protein is Large ribosomal subunit protein bL33A (rpmG1).